The chain runs to 779 residues: Catalase-peroxidase (779 aa).

Positions 148-270 (WHSAGTYRIT…LGAVQMGLIY (123 aa)) form a cross-link, tryptophyl-tyrosyl-methioninium (Trp-Tyr) (with M-296). Histidine 149 (proton acceptor) is an active-site residue. A cross-link (tryptophyl-tyrosyl-methioninium (Tyr-Met) (with W-148)) is located at residues 270–296 (YVNPEGPNGKPDPIAAAKDIRETFFRM). Histidine 311 is a binding site for heme b.

Belongs to the peroxidase family. Peroxidase/catalase subfamily. As to quaternary structure, homodimer or homotetramer. The cofactor is heme b. Post-translationally, formation of the three residue Trp-Tyr-Met cross-link is important for the catalase, but not the peroxidase activity of the enzyme.

It catalyses the reaction H2O2 + AH2 = A + 2 H2O. The catalysed reaction is 2 H2O2 = O2 + 2 H2O. In terms of biological role, bifunctional enzyme with both catalase and broad-spectrum peroxidase activity. The sequence is that of Catalase-peroxidase from Bradyrhizobium diazoefficiens (strain JCM 10833 / BCRC 13528 / IAM 13628 / NBRC 14792 / USDA 110).